The following is a 319-amino-acid chain: Protein StrN (319 aa).

It participates in antibiotic biosynthesis; streptomycin biosynthesis. This chain is Protein StrN (strN), found in Streptomyces griseus.